We begin with the raw amino-acid sequence, 90 residues long: MSIFRFFTRQQASAPQARERLQVLLAHERASYGGQSDLVAVLREEILAVIAKHIKVDREKVSVKMDRGDQVSTLEVDIELPLTAKKGRAA.

This sequence belongs to the MinE family.

In terms of biological role, prevents the cell division inhibition by proteins MinC and MinD at internal division sites while permitting inhibition at polar sites. This ensures cell division at the proper site by restricting the formation of a division septum at the midpoint of the long axis of the cell. The protein is Cell division topological specificity factor of Brucella abortus (strain S19).